The primary structure comprises 200 residues: Small ribosomal subunit protein uS5 (200 aa).

A compositionally biased stretch (polar residues) spans 1-12 (MGRPRTSQTRGQ). The tract at residues 1-49 (MGRPRTSQTRGQGPSGATGGNPRGGGSTTRERDARGARPGERDGGSEIQ) is disordered. The segment covering 13–27 (GPSGATGGNPRGGGS) has biased composition (gly residues). Residues 29–49 (TRERDARGARPGERDGGSEIQ) are compositionally biased toward basic and acidic residues. The 64-residue stretch at 48-111 (IQDRVVQIRR…EKARHAMFDV (64 aa)) folds into the S5 DRBM domain.

Belongs to the universal ribosomal protein uS5 family. Part of the 30S ribosomal subunit. Contacts proteins S4 and S8.

Functionally, with S4 and S12 plays an important role in translational accuracy. In terms of biological role, located at the back of the 30S subunit body where it stabilizes the conformation of the head with respect to the body. This is Small ribosomal subunit protein uS5 from Rubrobacter xylanophilus (strain DSM 9941 / JCM 11954 / NBRC 16129 / PRD-1).